The primary structure comprises 735 residues: Glycogen [starch] synthase, muscle (735 aa).

S8 carries the phosphoserine; by AMPK and PKA modification. S11 is subject to Phosphoserine. K39 serves as a coordination point for UDP. UDP-alpha-D-glucose contacts are provided by H205 and R211. The alpha-D-glucose 6-phosphate site is built by H291, E292, Q294, H297, and K301. R331 lines the UDP pocket. R331 serves as a coordination point for UDP-alpha-D-glucose. Position 412 is a phosphoserine (S412). Residue H501 participates in alpha-D-glucose 6-phosphate binding. UDP-alpha-D-glucose is bound by residues E510, W512, and G513. T515 serves as a coordination point for UDP. Positions 582 and 586 each coordinate alpha-D-glucose 6-phosphate. The tract at residues 629 to 735 is disordered; that stretch reads DATQGYRYPR…PASSLGEERN (107 aa). Position 641 is a phosphoserine; by DYRK2, GSK3-alpha, GSK3-beta and PASK (S641). Phosphoserine; by GSK3-alpha and GSK3-beta is present on residues S645 and S649. S652 carries the post-translational modification Phosphoserine. The residue at position 653 (S653) is a Phosphoserine; by GSK3-alpha and GSK3-beta. At S657 the chain carries Phosphoserine; by CK2. Residues 658 to 681 are compositionally biased toward acidic residues; that stretch reads EDEEEPRDGLPEEDGERYDEDEEA. Residues 682-695 are compositionally biased toward basic and acidic residues; the sequence is AKDRRNIRAPEWPR. Residue S698 is modified to Phosphoserine. Positions 698–735 are enriched in low complexity; that stretch reads SCTSSSGGSKRSNSVDTSSLSTPSEPLSPASSLGEERN. T700 carries the phosphothreonine modification. S709 and S711 each carry phosphoserine. Residue T719 is modified to Phosphothreonine. S725 and S729 each carry phosphoserine.

Belongs to the glycosyltransferase 3 family. As to quaternary structure, part of the GYS1-GYG1 complex, a heterooctamer composed of a tetramer of GYS1 and 2 dimers of GYG1, where each GYS1 protomer binds to one GYG1 subunit (via GYG1 C-terminus); the GYS1 tetramer may dissociate from GYG1 dimers to continue glycogen polymerization on its own. In terms of processing, phosphorylation at Ser-8 is required for modification of Ser-11 by casein kinase I. Post-translationally, phosphorylated at Ser-641 by PASK, leading to inactivation; phosphorylation by PASK is inhibited by glycogen. Dephosphorylation at Ser-641 and Ser-645 by PP1 activates the enzyme. Phosphorylation at Ser-8 by AMPK inactivates the enzyme activity. Phosphorylated at Ser-641 by DYRK2, leading to inactivation. Primed phosphorylation at Ser-657 (site 5) by CSNK2A1 and CSNK2A2 is required for inhibitory phosphorylation at Ser-641 (site 3a), Ser-645 (site 3b), Ser-649 (site 3c) and Ser-653 (site 4) by GSK3A and GSK3B.

It catalyses the reaction [(1-&gt;4)-alpha-D-glucosyl](n) + UDP-alpha-D-glucose = [(1-&gt;4)-alpha-D-glucosyl](n+1) + UDP + H(+). It functions in the pathway glycan biosynthesis; glycogen biosynthesis. Allosteric activation by glucose-6-phosphate. Phosphorylation reduces the activity towards UDP-glucose. When in the non-phosphorylated state, glycogen synthase does not require glucose-6-phosphate as an allosteric activator; when phosphorylated it does. Functionally, glycogen synthase participates in the glycogen biosynthetic process along with glycogenin and glycogen branching enzyme. Extends the primer composed of a few glucose units formed by glycogenin by adding new glucose units to it. In this context, glycogen synthase transfers the glycosyl residue from UDP-Glc to the non-reducing end of alpha-1,4-glucan. The protein is Glycogen [starch] synthase, muscle of Oryctolagus cuniculus (Rabbit).